Consider the following 314-residue polypeptide: Olfactory receptor 9A4 (314 aa).

Over M1 to H24 the chain is Extracellular. N4 carries N-linked (GlcNAc...) asparagine glycosylation. A helical membrane pass occupies residues I25–I45. Residues M46–R53 are Cytoplasmic-facing. A helical membrane pass occupies residues L54–T74. Topologically, residues I75–V99 are extracellular. A disulfide bond links C97 and C189. Residues Q100–V120 traverse the membrane as a helical segment. Residues D121–H139 are Cytoplasmic-facing. The helical transmembrane segment at T140–V160 threads the bilayer. Residues Y161–F197 lie on the Extracellular side of the membrane. An N-linked (GlcNAc...) asparagine glycan is attached at N190. Residues I198–S217 traverse the membrane as a helical segment. Topologically, residues N218–S237 are cytoplasmic. The helical transmembrane segment at F238 to L258 threads the bilayer. Residues Y259–N271 lie on the Extracellular side of the membrane. Residues W272–L292 form a helical membrane-spanning segment. Topologically, residues R293–N314 are cytoplasmic.

Belongs to the G-protein coupled receptor 1 family.

The protein resides in the cell membrane. Odorant receptor. The protein is Olfactory receptor 9A4 (OR9A4) of Homo sapiens (Human).